The sequence spans 781 residues: Catenin beta-1 (781 aa).

Residue alanine 2 is modified to N-acetylalanine. Residues 2 to 23 form an interaction with VCL region; that stretch reads ATQADLMELDMAMEPDRKAAVS. Serine 23 is subject to Phosphoserine; by GSK3-beta; alternate. An O-linked (GlcNAc) serine; alternate glycan is attached at serine 23. Serine 29 carries the post-translational modification Phosphoserine; by GSK3-beta. Phosphoserine; by GSK3-beta and HIPK2 occurs at positions 33 and 37. The disordered stretch occupies residues 34–57; sequence GIHSGATTTAPSLSGKGNPEEEDV. At threonine 41 the chain carries Phosphothreonine; by GSK3-beta. Serine 45 carries the phosphoserine modification. The residue at position 49 (lysine 49) is an N6-acetyllysine. Tyrosine 64 is modified (phosphotyrosine; by PTK6). Position 142 is a phosphotyrosine; by FYN and PTK6 (tyrosine 142). ARM repeat units follow at residues 151-191, 193-234, 235-276, 277-318, 319-360, 361-389, 400-441, 442-484, 489-530, 531-571, 594-636, and 637-666; these read RAIP…IMRS, QMVS…IFKS, GGIP…VRLA, GGLQ…ILAS, GGPQ…IVEA, GGMQ…RNLS, GLLG…VCQV, GGIE…AQNA, YGLP…LREQ, GAIP…EIVE, NTIP…AEGA, and TAPL…SEDK. The segment at 156 to 178 is interaction with BCL9; it reads LTKLLNDEDQVVVNKAAVMVHQL. Phosphoserine; by CDK5 is present on serine 191. At serine 246 the chain carries Phosphoserine; by CDK5. Residue tyrosine 331 is modified to Phosphotyrosine; by PTK6. A Phosphotyrosine; by SRC and PTK6 modification is found at tyrosine 333. At serine 552 the chain carries Phosphoserine. Threonine 556 is modified ((Microbial infection) Phosphothreonine). Residue threonine 556 is modified to Phosphothreonine. Cysteine 619 is modified (S-nitrosocysteine). Serine 675 bears the Phosphoserine mark. A disordered region spans residues 705-781; the sequence is EPLGYRQDDP…NQLAWFDTDL (77 aa). A compositionally biased stretch (basic and acidic residues) spans 734–745; it reads MMEHEMGGHHPG. The segment at 772–781 is interaction with SCRIB; the sequence is NQLAWFDTDL.

It belongs to the beta-catenin family. As to quaternary structure, two separate complex-associated pools are found in the cytoplasm. The majority is present as component of an E-cadherin:catenin adhesion complex composed of at least E-cadherin/CDH1 and beta-catenin/CTNNB1, and possibly alpha-catenin/CTNNA1; the complex is located to adherens junctions. The stable association of CTNNA1 is controversial as CTNNA1 was shown not to bind to F-actin when assembled in the complex. Alternatively, the CTNNA1-containing complex may be linked to F-actin by other proteins such as LIMA1. Another cytoplasmic pool is part of a large complex containing AXIN1, AXIN2, APC, CSNK1A1 and GSK3B that promotes phosphorylation on N-terminal Ser and Thr residues and ubiquitination of CTNNB1 via BTRC and its subsequent degradation by the proteasome. Wnt-dependent activation of DVL antagonizes the action of GSK3B. When GSK3B activity is inhibited the complex dissociates, CTNNB1 is dephosphorylated and is no longer targeted for destruction. The stabilized protein translocates to the nucleus, where it binds TCF/LEF-1 family members, BCL9, BCL9L and possibly also RUVBL1 and CHD8. Binds CTNNBIP and EP300. CTNNB1 forms a ternary complex with LEF1 and EP300 that is disrupted by CTNNBIP1 binding. Interacts with TAX1BP3 (via the PDZ domain); this interaction inhibits the transcriptional activity of CTNNB1. Interacts with AJAP1, BAIAP1, CARM1, CTNNA3, CXADR and PCDH11Y. Binds NHERF1. Interacts with GLIS2 and MUC1. Interacts with SLC30A9. Interacts with XIRP1. Interacts directly with AXIN1; the interaction is regulated by CDK2 phosphorylation of AXIN1. Interacts with SCRIB. Interacts with RAPGEF2. Interacts with PTPRU (via the cytoplasmic juxtamembrane domain). Interacts with EMD. Interacts with TNIK and TCF7L2. Interacts with SESTD1 and TRPC4. Interacts with CAV1. Interacts with TRPV4. The TRPV4 and CTNNB1 complex can interact with CDH1. Interacts with VCL. Interacts with PTPRJ. Interacts with PKT7 and CDK2. Interacts with FAT1 (via the cytoplasmic domain). Interacts with NANOS1 and NDRG2. Interacts with isoform 1 of NEK2. Interacts with both isoform 1 and isoform 2 of CDK5. Interacts with PTK6. Interacts with SOX7; this interaction may lead to proteasomal degradation of active CTNNB1 and thus inhibition of Wnt/beta-catenin-stimulated transcription. Identified in a complex with HINT1 and MITF. Interacts with FHIT. The CTNNB1 and TCF7L2/TCF4 complex interacts with PML (isoform PML-4). Interacts with FERMT2. Identified in a complex with TCF7L2/TCF4 and FERMT2. Interacts with RORA. May interact with P-cadherin/CDH3. Interacts with RNF220. Interacts with CTNND2. Interacts (via the C-terminal region) with CBY1. The complex composed, at least, of APC, CTNNB1 and GSK3B interacts with JPT1; the interaction requires the inactive form of GSK3B (phosphorylated at 'Ser-9'). Interacts with DLG5. Interacts with FAM53B; promoting translocation to the nucleus. Interacts with TMEM170B. Interacts with AHI1. Interacts with GID8. Component of an cadherin:catenin adhesion complex composed of at least of CDH26, beta-catenin/CTNNB1, alpha-catenin/CTNNA1 and p120 catenin/CTNND1. Forms a complex comprising APPL1, RUVBL2, APPL2, HDAC1 and HDAC2. Interacts with IRF2BPL; mediates the ubiquitination and degradation of CTNNB1. Interacts with AMFR. Interacts with LMBR1L. Interacts with SOX30; prevents interaction of CTNNB1 with TCF7L2/TCF4 and leads to inhibition of Wnt signaling. Interacts with SOX9; inhibiting CTNNB1 activity by competing with the binding sites of TCF/LEF within CTNNB1, thereby inhibiting the Wnt signaling. Interacts with SPN/CD43 cytoplasmic tail. Interacts (when phosphorylated at Tyr-333) with isoform M2 of PKM (PKM2); promoting transcription activation. Interacts with PKP2 (via HEAD domain). Interacts with CDH1. Interacts (when unphosphorylated) with FLYWCH1, perhaps preventing interaction of CTNNB1 with TCF4, and thereby regulating transcription activation; phosphorylation of CTNNB1 may inhibit the interaction. Interacts (via the central armadillo domains) with probable transcriptional regulator ADNP (via N-terminal region); interaction is direct and stabilizes CTNNB1 by modulating its phosphorylation by glycogen synthase kinase-3 beta GSK3B. Interacts with NR5A2. Interacts with DSG2; the interaction promotes localization of CTNNB1 at cell junctions thus reducing its nuclear localization and subsequent transcription of CTNNB1/TCF-target genes. In terms of assembly, (Microbial infection) Interacts with herpes virus 8 protein vPK; this interaction inhibits the Wnt signaling pathway. Post-translationally, phosphorylation at Ser-552 by AMPK promotes stabilization of the protein, enhancing TCF/LEF-mediated transcription. Phosphorylation by GSK3B requires prior phosphorylation of Ser-45 by another kinase. Phosphorylation proceeds then from Thr-41 to Ser-37 and Ser-33. Phosphorylated by NEK2. EGF stimulates tyrosine phosphorylation. Phosphorylated on Ser-33 and Ser-37 by HIPK2 and GSK3B, this phosphorylation triggers proteasomal degradation. Phosphorylation on Ser-191 and Ser-246 by CDK5. Phosphorylation by CDK2 regulates insulin internalization. Phosphorylation by PTK6 at Tyr-64, Tyr-142, Tyr-331 and/or Tyr-333 with the predominant site at Tyr-64 is not essential for inhibition of transcriptional activity. Phosphorylation by SRC at Tyr-333 promotes interaction with isoform M2 of PKM (PKM2); promoting transcription activation. In terms of processing, ubiquitinated by the SCF(BTRC) E3 ligase complex when phosphorylated by GSK3B, leading to its degradation. Ubiquitinated by a E3 ubiquitin ligase complex containing UBE2D1, SIAH1, CACYBP/SIP, SKP1, APC and TBL1X, leading to its subsequent proteasomal degradation. Ubiquitinated and degraded following interaction with SOX9. Ubiquitinated via 'Lys-11'- and 'Lys-29'-linked ubiquitin chains by UBR5, leading to its stabilization. S-nitrosylation at Cys-619 within adherens junctions promotes VEGF-induced, NO-dependent endothelial cell permeability by disrupting interaction with E-cadherin, thus mediating disassembly adherens junctions. Post-translationally, O-glycosylation at Ser-23 decreases nuclear localization and transcriptional activity, and increases localization to the plasma membrane and interaction with E-cadherin CDH1. In terms of processing, deacetylated at Lys-49 by SIRT1. Phosphorylated at Thr-556 by herpes virus 1/HHV-1 leading to CTNNB1 inhibition. In terms of tissue distribution, expressed in several hair follicle cell types: basal and peripheral matrix cells, and cells of the outer and inner root sheaths. Expressed in colon. Present in cortical neurons (at protein level). Expressed in breast cancer tissues (at protein level).

It is found in the cytoplasm. The protein resides in the nucleus. The protein localises to the cytoskeleton. Its subcellular location is the cell junction. It localises to the adherens junction. It is found in the cell membrane. The protein resides in the microtubule organizing center. The protein localises to the centrosome. Its subcellular location is the spindle pole. It localises to the synapse. It is found in the cilium basal body. Key downstream component of the canonical Wnt signaling pathway. In the absence of Wnt, forms a complex with AXIN1, AXIN2, APC, CSNK1A1 and GSK3B that promotes phosphorylation on N-terminal Ser and Thr residues and ubiquitination of CTNNB1 via BTRC and its subsequent degradation by the proteasome. In the presence of Wnt ligand, CTNNB1 is not ubiquitinated and accumulates in the nucleus, where it acts as a coactivator for transcription factors of the TCF/LEF family, leading to activate Wnt responsive genes. Also acts as a coactivator for other transcription factors, such as NR5A2. Promotes epithelial to mesenchymal transition/mesenchymal to epithelial transition (EMT/MET) via driving transcription of CTNNB1/TCF-target genes. Involved in the regulation of cell adhesion, as component of an E-cadherin:catenin adhesion complex. Acts as a negative regulator of centrosome cohesion. Involved in the CDK2/PTPN6/CTNNB1/CEACAM1 pathway of insulin internalization. Blocks anoikis of malignant kidney and intestinal epithelial cells and promotes their anchorage-independent growth by down-regulating DAPK2. Disrupts PML function and PML-NB formation by inhibiting RANBP2-mediated sumoylation of PML. Promotes neurogenesis by maintaining sympathetic neuroblasts within the cell cycle. Involved in chondrocyte differentiation via interaction with SOX9: SOX9-binding competes with the binding sites of TCF/LEF within CTNNB1, thereby inhibiting the Wnt signaling. Acts as a positive regulator of odontoblast differentiation during mesenchymal tooth germ formation, via promoting the transcription of differentiation factors such as LEF1, BMP2 and BMP4. Activity is repressed in a MSX1-mediated manner at the bell stage of mesenchymal tooth germ formation which prevents premature differentiation of odontoblasts. The chain is Catenin beta-1 from Homo sapiens (Human).